The primary structure comprises 189 residues: Peptidyl-tRNA hydrolase (189 aa).

Tyrosine 15 serves as a coordination point for tRNA. Histidine 20 (proton acceptor) is an active-site residue. 3 residues coordinate tRNA: tyrosine 64, asparagine 66, and asparagine 112.

The protein belongs to the PTH family. Monomer.

It is found in the cytoplasm. It catalyses the reaction an N-acyl-L-alpha-aminoacyl-tRNA + H2O = an N-acyl-L-amino acid + a tRNA + H(+). In terms of biological role, hydrolyzes ribosome-free peptidyl-tRNAs (with 1 or more amino acids incorporated), which drop off the ribosome during protein synthesis, or as a result of ribosome stalling. Catalyzes the release of premature peptidyl moieties from peptidyl-tRNA molecules trapped in stalled 50S ribosomal subunits, and thus maintains levels of free tRNAs and 50S ribosomes. This Sulfurihydrogenibium sp. (strain YO3AOP1) protein is Peptidyl-tRNA hydrolase.